The chain runs to 193 residues: Potassium-transporting ATPase KdpC subunit (193 aa).

Residues isoleucine 14–alanine 34 form a helical membrane-spanning segment.

It belongs to the KdpC family. In terms of assembly, the system is composed of three essential subunits: KdpA, KdpB and KdpC.

The protein resides in the cell membrane. In terms of biological role, part of the high-affinity ATP-driven potassium transport (or Kdp) system, which catalyzes the hydrolysis of ATP coupled with the electrogenic transport of potassium into the cytoplasm. This subunit acts as a catalytic chaperone that increases the ATP-binding affinity of the ATP-hydrolyzing subunit KdpB by the formation of a transient KdpB/KdpC/ATP ternary complex. This chain is Potassium-transporting ATPase KdpC subunit, found in Bacillus anthracis (strain A0248).